The primary structure comprises 377 residues: Chaperone protein DnaJ (377 aa).

Residues 5–70 form the J domain; it reads DYYQILGIPK…EKRSAYDQYG (66 aa). The CR-type zinc finger occupies 132 to 210; that stretch reads GIKKEIQIPT…CHGQGRVETY (79 aa). Zn(2+) contacts are provided by Cys145, Cys148, Cys162, Cys165, Cys184, Cys187, Cys198, and Cys201. 4 CXXCXGXG motif repeats span residues 145 to 152, 162 to 169, 184 to 191, and 198 to 205; these read CKTCYGSG, CSTCHGKG, CPTCHGKG, and CNLCHGQG.

It belongs to the DnaJ family. In terms of assembly, homodimer. It depends on Zn(2+) as a cofactor.

Its subcellular location is the cytoplasm. Its function is as follows. Participates actively in the response to hyperosmotic and heat shock by preventing the aggregation of stress-denatured proteins and by disaggregating proteins, also in an autonomous, DnaK-independent fashion. Unfolded proteins bind initially to DnaJ; upon interaction with the DnaJ-bound protein, DnaK hydrolyzes its bound ATP, resulting in the formation of a stable complex. GrpE releases ADP from DnaK; ATP binding to DnaK triggers the release of the substrate protein, thus completing the reaction cycle. Several rounds of ATP-dependent interactions between DnaJ, DnaK and GrpE are required for fully efficient folding. Also involved, together with DnaK and GrpE, in the DNA replication of plasmids through activation of initiation proteins. The chain is Chaperone protein DnaJ from Buchnera aphidicola subsp. Acyrthosiphon pisum (strain 5A).